Consider the following 897-residue polypeptide: uncharacterized protein (897 aa).

Disordered stretches follow at residues 25 to 89 (RLQD…TRKR) and 106 to 168 (PTRL…TPPS). Composition is skewed to low complexity over residues 32–44 (SSSP…SSSS), 57–68 (SLQNSQSSSYSL), and 106–142 (PTRL…SSVS). The Helicase ATP-binding domain maps to 263–446 (SMEQSSKCGG…YSLLKFLRIK (184 aa)). 276 to 283 (DDMGLGKT) contributes to the ATP binding site. Residues 397-400 (DEAH) carry the DEAH box motif. The segment at 606–655 (CSVCLDPCLAPVFIIPCGHFTCQECMSMLVGQKYGSSSTSTIIAKCPMCR) adopts an RING-type zinc-finger fold. The region spanning 727–890 (QARQTILDII…LSRLDKEELL (164 aa)) is the Helicase C-terminal domain.

Belongs to the SNF2/RAD54 helicase family.

It is found in the cytoplasm. The protein localises to the nucleus. This is an uncharacterized protein from Schizosaccharomyces pombe (strain 972 / ATCC 24843) (Fission yeast).